A 1061-amino-acid polypeptide reads, in one-letter code: E3 ubiquitin-protein ligase Smurf1 (1061 aa).

The C2 domain occupies 1-116; sequence MNKLDYPRRN…KGAGFQRLDL (116 aa). Disordered stretches follow at residues 143-176 and 188-496; these read SGNP…WEER and HATK…SGQR. Positions 167–200 constitute a WW 1 domain; it reads DSLPEGWEERRTDNGRVYYVNHATKSTQWDRPRQ. Polar residues-rich tracts occupy residues 207–225 and 233–255; these read SHAT…NSGD and TRST…SVTA. Phosphoserine is present on Ser-262. Polar residues predominate over residues 264–273; the sequence is EILSSVGKEN. Composition is skewed to low complexity over residues 274–300 and 311–322; these read TSPT…SAGG and PATPTSSTTSAS. Polar residues predominate over residues 348 to 359; the sequence is TPTSPTGQQNYV. A compositionally biased stretch (low complexity) spans 360–378; the sequence is NGNAQNGSTSGNGSGQAAQ. Polar residues predominate over residues 379 to 392; it reads PQSASNGWTQEDAA. Residues 393–409 show a composition bias toward low complexity; sequence TTTSPSTTTSPPRHSQS. A Phosphothreonine modification is found at Thr-412. Ser-416 bears the Phosphoserine mark. Polar residues predominate over residues 417-439; it reads PPASVTPSANGNVHSPNANSTPA. A compositionally biased stretch (gly residues) spans 480–494; the sequence is RNGGTSGGGGGGGSG. WW domains lie at 513-546 and 561-594; these read LDLP…DPRI and GPLP…DPRL. Residues 513 to 602 form an interaction with MAD region; the sequence is LDLPPGYEMR…RLSGSILQMI (90 aa). Composition is skewed to low complexity over residues 608-617 and 624-656; these read PPTSAANAGT and TPAT…TNPP. Positions 608-661 are disordered; sequence PPTSAANAGTPAPPSATPATPSAAAAVPPQATPASNATPTTLTTTTNPPHRIVP. One can recognise an HECT domain in the interval 723-1061; that stretch reads RAKDMRKRLM…VEETCGFAVE (339 aa). The active-site Glycyl thioester intermediate is Cys-1029.

In terms of assembly, interacts with phosphorylated MAD.

The catalysed reaction is S-ubiquitinyl-[E2 ubiquitin-conjugating enzyme]-L-cysteine + [acceptor protein]-L-lysine = [E2 ubiquitin-conjugating enzyme]-L-cysteine + N(6)-ubiquitinyl-[acceptor protein]-L-lysine.. It functions in the pathway protein modification; protein ubiquitination. E3 ubiquitin-protein ligase which accepts ubiquitin from an E2 ubiquitin-conjugating enzyme in the form of a thioester and then directly transfers the ubiquitin to targeted substrates. Down-regulates Dpp signaling after gastrulation by promoting MAD ubiquitination and subsequent degradation. The chain is E3 ubiquitin-protein ligase Smurf1 from Drosophila melanogaster (Fruit fly).